The following is a 576-amino-acid chain: MIVFGWAVFLASRSLGQGLLLTLEEHIAHFLGTGGATTTMGNSCICRDDSGTDDSVDTQQQQAENSAVPTADTRSQPRDPVRPPRRGRGPHEPRRKKQNVDGLVLDTLAVIRTLVDNDQEPPYSMITLHEMAETDEGWLDVVQSLIRVIPLEDPLGPAVITLLLDECPLPTKDALQKLTEILNLNGEVACQDSSHPAKHRNTSAVLGCLAEKLAGPASIGLLSPGILEYLLQCLKLQSHPTVMLFALIALEKFAQTSENKLTISESSISDRLVTLESWANDPDYLKRQVGFCAQWSLDNLFLKEGRQLTYEKVNLSSIRAMLNSNDVSEYLKISPHGLEARCDASSFESVRCTFCVDAGVWYYEVTVVTSGVMQIGWATRDSKFLNHEGYGIGDDEYSCAYDGCRQLIWYNARSKPHIHPCWKEGDTVGFLLDLNEKQMIFFLNGNQLPPEKQVFSSTVSGFFAAASFMSYQQCEFNFGAKPFKYPPSMKFSTFNDYAFLTAEEKIILPRHRRLALLKQVSIRENCCSLCCDEVADTQLKPCGHSDLCMDCALQLETCPLCRKEIVSRIRQISHIS.

Positions 1 to 16 (MIVFGWAVFLASRSLG) are cleaved as a signal peptide. Serine 50 carries the phosphoserine modification. Residues 50 to 99 (SGTDDSVDTQQQQAENSAVPTADTRSQPRDPVRPPRRGRGPHEPRRKKQN) are disordered. Positions 57-68 (DTQQQQAENSAV) are enriched in polar residues. The segment covering 83-97 (PPRRGRGPHEPRRKK) has biased composition (basic residues). The region spanning 300–483 (LFLKEGRQLT…CEFNFGAKPF (184 aa)) is the B30.2/SPRY domain. A glycan (N-linked (GlcNAc...) asparagine) is linked at asparagine 314. An RING-type zinc finger spans residues 527–562 (CSLCCDEVADTQLKPCGHSDLCMDCALQLETCPLCR).

It is found in the secreted. In Pongo abelii (Sumatran orangutan), this protein is RING finger and SPRY domain-containing protein 1 (RSPRY1).